A 349-amino-acid polypeptide reads, in one-letter code: Aldehyde reductase YahK (349 aa).

Zn(2+) is bound by residues cysteine 40, histidine 62, cysteine 93, cysteine 96, cysteine 99, cysteine 107, and cysteine 158.

Belongs to the zinc-containing alcohol dehydrogenase family. It depends on Zn(2+) as a cofactor.

It carries out the reaction a primary alcohol + NADP(+) = an aldehyde + NADPH + H(+). Functionally, catalyzes the reduction of a wide range of aldehydes into their corresponding alcohols. Has a strong preference for NADPH over NADH as the electron donor. Cannot use a ketone as substrate. Is a major source of NADPH-dependent aldehyde reductase activity in E.coli. The in vivo functions of YahK has yet to be determined. The protein is Aldehyde reductase YahK (yahK) of Escherichia coli (strain K12).